The following is a 72-amino-acid chain: Translation initiation factor IF-1 (72 aa).

The S1-like domain occupies M1–K72.

The protein belongs to the IF-1 family. Component of the 30S ribosomal translation pre-initiation complex which assembles on the 30S ribosome in the order IF-2 and IF-3, IF-1 and N-formylmethionyl-tRNA(fMet); mRNA recruitment can occur at any time during PIC assembly.

The protein localises to the cytoplasm. Its function is as follows. One of the essential components for the initiation of protein synthesis. Stabilizes the binding of IF-2 and IF-3 on the 30S subunit to which N-formylmethionyl-tRNA(fMet) subsequently binds. Helps modulate mRNA selection, yielding the 30S pre-initiation complex (PIC). Upon addition of the 50S ribosomal subunit IF-1, IF-2 and IF-3 are released leaving the mature 70S translation initiation complex. The chain is Translation initiation factor IF-1 from Clostridium acetobutylicum (strain ATCC 824 / DSM 792 / JCM 1419 / IAM 19013 / LMG 5710 / NBRC 13948 / NRRL B-527 / VKM B-1787 / 2291 / W).